Reading from the N-terminus, the 115-residue chain is Ribosome-binding factor A (115 aa).

The protein belongs to the RbfA family. In terms of assembly, monomer. Binds 30S ribosomal subunits, but not 50S ribosomal subunits or 70S ribosomes.

Its subcellular location is the cytoplasm. Functionally, one of several proteins that assist in the late maturation steps of the functional core of the 30S ribosomal subunit. Associates with free 30S ribosomal subunits (but not with 30S subunits that are part of 70S ribosomes or polysomes). Required for efficient processing of 16S rRNA. May interact with the 5'-terminal helix region of 16S rRNA. The chain is Ribosome-binding factor A from Streptococcus gordonii (strain Challis / ATCC 35105 / BCRC 15272 / CH1 / DL1 / V288).